The chain runs to 952 residues: Protein translocase subunit SecA (952 aa).

ATP-binding positions include glutamine 104, glycine 122–threonine 126, and aspartate 512.

The protein belongs to the SecA family. Monomer and homodimer. Part of the essential Sec protein translocation apparatus which comprises SecA, SecYEG and auxiliary proteins SecDF. Other proteins may also be involved.

The protein resides in the cell inner membrane. It localises to the cytoplasm. It catalyses the reaction ATP + H2O + cellular proteinSide 1 = ADP + phosphate + cellular proteinSide 2.. Its function is as follows. Part of the Sec protein translocase complex. Interacts with the SecYEG preprotein conducting channel. Has a central role in coupling the hydrolysis of ATP to the transfer of proteins into and across the cell membrane, serving as an ATP-driven molecular motor driving the stepwise translocation of polypeptide chains across the membrane. In Gloeobacter violaceus (strain ATCC 29082 / PCC 7421), this protein is Protein translocase subunit SecA.